Reading from the N-terminus, the 840-residue chain is Lysine-specific demethylase JMJ27 (840 aa).

A compositionally biased stretch (basic residues) spans 1–10; the sequence is MEKMRGKRIR. The disordered stretch occupies residues 1-52; the sequence is MEKMRGKRIRPRDSGELVEDGRSESERKTRKKENDVVSKGRIGRGRGRGEVS. Basic and acidic residues predominate over residues 11–38; it reads PRDSGELVEDGRSESERKTRKKENDVVS. The Zn(2+) site is built by C80, C83, C95, C98, C104, C107, C124, and C127. The RING-type; degenerate zinc finger occupies 80–127; it reads CHHCKILTSESDLIFCSKCNKKCYCFDCIKRSYSERTHEEVRAACPFC. One can recognise a JmjC domain in the interval 502 to 798; it reads PKSGILNLAT…ECLRLTQEFR (297 aa). Positions 546 and 548 each coordinate Fe cation. The tract at residues 594–678 is disordered; it reads KEASELENKS…ETDGNTNERS (85 aa). Residues 595–620 show a composition bias toward basic and acidic residues; that stretch reads EASELENKSMKEVDESKKDLKDKAAN. Over residues 621–631 the composition is skewed to polar residues; it reads EEQSNNSSRPS. Positions 635-646 are enriched in basic and acidic residues; the sequence is EAEKVIISKEDN. Residues 647 to 659 are compositionally biased toward polar residues; sequence PTQPAVSTSVESI. The segment covering 660-678 has biased composition (basic and acidic residues); that stretch reads QEQKLDAPKETDGNTNERS. H766 contributes to the Fe cation binding site.

The protein belongs to the JARID1 histone demethylase family. As to quaternary structure, interacts with RPN1A. The cofactor is Fe(2+). As to expression, expressed in seedlings, inflorescences, flowers and siliques, and, at low levels, in roots, leaves (including vascular bundles) and stems. Particularly observed in stomatal guard cells.

It is found in the nucleus. The protein localises to the cytoplasm. It carries out the reaction N(6),N(6)-dimethyl-L-lysyl(9)-[histone H3] + 2-oxoglutarate + O2 = N(6)-methyl-L-lysyl(9)-[histone H3] + formaldehyde + succinate + CO2. The enzyme catalyses N(6)-methyl-L-lysyl(9)-[histone H3] + 2-oxoglutarate + O2 = L-lysyl(9)-[histone H3] + formaldehyde + succinate + CO2. It catalyses the reaction N(6),N(6)-dimethyl-L-lysyl(9)-[histone H3] + 2 2-oxoglutarate + 2 O2 = L-lysyl(9)-[histone H3] + 2 formaldehyde + 2 succinate + 2 CO2. Functionally, histone demethylase that demethylates 'Lys-9' (H3K9me) of histone H3 with a specific activity for H3K9me1 and H3K9me2. No activity on H3K4, H3K27, H3K36, H3R2 and H4R3 methyl marks, but weak activity on H3K9me3. Involved in regulation of gene expression. Regulates flowering time by repressing the major flowering regulator CONSTANS (CO) and promoting FLOWERING LOCUS C (FLC). Exhibits a positive impact on abscisic acid- (ABA), hydrogen peroxide- (H(2)O(2)) and calcium- (Ca(2+)) induced stomatal closure. Promotes stomatal-closure-dependent drought-stress responses through its histone demethylase activity toward at least GOLS2 and RD20 loci, thus protecting them from silencing by removing H3K9me2 marks in drought conditions. Required for plant defenses leading to resistance against the virulent bacterial pathogen Pseudomonas syringae pv. tomato DC3000 (Pst DC3000) via a negative regulation of WRKY25 (a repressor of defense) and by triggering the expression of several pathogenesis-related (PR) proteins (e.g. PR1, PR3, PR4 and PR5). This chain is Lysine-specific demethylase JMJ27, found in Arabidopsis thaliana (Mouse-ear cress).